A 652-amino-acid chain; its full sequence is Potassium voltage-gated channel subfamily KQT member 1 (652 aa).

Over 1 to 110 the chain is Cytoplasmic; the sequence is MSSEQPAWTF…YNFLERPTGW (110 aa). Residues 111 to 132 traverse the membrane as a helical segment; that stretch reads KCFVYHFTVFLIVLICLIFSVL. At 133 to 143 the chain is on the extracellular side; that stretch reads STIQQYNNLAT. Residues 144-166 form a helical membrane-spanning segment; that stretch reads ETLFWMEIVLVVFFGAEYVVRLW. At 167–182 the chain is on the cytoplasmic side; sequence SAGCRSKYVGVWGRLR. The chain crosses the membrane as a helical span at residues 183–208; sequence FARKPISVIDLIVVVASVIVLCVGSN. At 209-216 the chain is on the extracellular side; that stretch reads GQVFATSA. Residues 217–232 form a helical; Voltage-sensor membrane-spanning segment; it reads IRGIRFLQILRMLHVD. Residues 228 to 236 form an interaction with KCNE3 region; that stretch reads MLHVDRQGG. Residues 233–250 are Cytoplasmic-facing; that stretch reads RQGGTWRLLGSVVFIHRQ. An a 1,2-diacyl-sn-glycero-3-phospho-(1D-myo-inositol-4,5-bisphosphate)-binding site is contributed by Gln234. A helical transmembrane segment spans residues 251 to 273; that stretch reads ELITTLYIGFLGLIFSSYFVYLA. At 274-289 the chain is on the extracellular side; sequence EKDAIDSSGEYQFGSY. The pore-forming intramembrane region spans 290–310; sequence ADALWWGVVTVTTIGYGDKVP. At 311–312 the chain is on the extracellular side; it reads QT. The chain crosses the membrane as a helical span at residues 313–338; it reads WIGKTIASCFSVFAISFFALPAGILG. Residues 339–652 are Cytoplasmic-facing; that stretch reads SGFALKVQQK…VPRMTQDNIS (314 aa). The interaction with CALM stretch occupies residues 360–372; sequence AAASLIQTAWRCY. Residues 393–419 form a disordered region; that stretch reads HHLMSPSPKPKKSAMVKKKKIRTERDE. Positions 401–414 are enriched in basic residues; the sequence is KPKKSAMVKKKKIR. Residues 504-518 are interaction with CALM; calcium-dependent; the sequence is KVIRRMQYFVAKKKF. An interaction with KCNE1 C-terminus region spans residues 524–561; the sequence is PYDVRDVIEQYSQGHLNLMVRIKELQRRLDQSLGKPSL. Residues 577–605 are interaction with AKAP9; it reads IGSRLNRVEDKVTQMDHKLNLITDMLHHL. The C-terminal assembly domain (tetramerization) stretch occupies residues 578 to 609; the sequence is GSRLNRVEDKVTQMDHKLNLITDMLHHLLTNQ. Positions 609 to 652 are disordered; sequence QQGSQSIRTPHRSNSLNSENHPSRNTLPTYEQLNVPRMTQDNIS.

Belongs to the potassium channel family. KQT (TC 1.A.1.15) subfamily. Kv7.1/KCNQ1 sub-subfamily. As to quaternary structure, tetramer. Heterotetramer with KCNE1; targets to the membrane raft. Interacts (via C-terminus) with CALM; forms a heterotetramer in a calcium-independent manner. Interacts with KCNE2; form a heterooligomer complex that targets to the membrane raft and leading to currents with an apparently instantaneous activation, a rapid deactivation process and a linear current-voltage relationship and decreases the amplitude of the outward current. Interacts with KCNE3; four KCNE3 molecules are bound to one KCNQ1 tetramer (4:4 KCNQ1:KCNE3 stoichiometry); alters membrane raft localization; affects KCNQ1 structure and gating properties. Interacts with KCNE4; impairs KCNQ1 localization in lipid rafts and inhibits voltage-gated potassium channel activity. Interacts with KCNE5; impairs KCNQ1 localization in lipid rafts and only conducts current upon strong and continued depolarization.

The protein localises to the cell membrane. The protein resides in the cytoplasmic vesicle membrane. It localises to the membrane raft. It is found in the endoplasmic reticulum. Its subcellular location is the basolateral cell membrane. It catalyses the reaction K(+)(in) = K(+)(out). With respect to regulation, PIP2 molecule is essential to activate KCNQ channels by inducing the coupling of the voltage-sensing domain (VSD) and the pore-forming domain (PD). Upon channel activation, PIP2 disrupts the VSD-calmodulin/CALM interactions, causing the release of CALM from the VSD which triggers the opening of the gate. Calcium potentiates KCNQ1 channel current through calcium-bound CALM. Calcium-bound CALM competes with PIP2 to stabilize the channel open state. In terms of biological role, pore-forming subunit of the voltage-gated potassium (Kv) channel involved in the regulation of cardiomyocyte excitability and important in normal development and functions of myocardium, inner ear, stomach and colon. Associates with KCNE beta subunits that modulates current kinetics. Induces a voltage-dependent by rapidly activating and slowly deactivating potassium-selective outward current. Also promotes a delayed voltage activated potassium current showing outward rectification characteristic. During beta-adrenergic receptor stimulation participates in cardiac repolarization by associating with KCNE1 to form the I(Ks) cardiac potassium current that increases the amplitude and slows down the activation kinetics of outward potassium current I(Ks). When associated with KCNE3, forms the potassium channel that is important for cyclic AMP-stimulated intestinal secretion of chloride ions. When associated with KCNE2, forms a heterooligomer complex leading to currents with an apparently instantaneous activation, a rapid deactivation process and a linear current-voltage relationship and decreases the amplitude of the outward current. When associated with KCNE4, inhibits voltage-gated potassium channel activity. When associated with KCNE5, this complex only conducts current upon strong and continued depolarization. This is Potassium voltage-gated channel subfamily KQT member 1 from Xenopus laevis (African clawed frog).